A 229-amino-acid polypeptide reads, in one-letter code: Flagellar calcium-binding protein TB-1.7G (229 aa).

Residues 1 to 25 (GSKNASNPKDGAASKGGKDGKTTAD) are disordered. The span at 16–25 (GGKDGKTTAD) shows a compositional bias: basic and acidic residues. 4 consecutive EF-hand domains span residues 44–79 (ESKSRRIELFKQFDTNGTGKLGFREVLDGCYGILKL), 80–115 (DEFTTHLPDIVQRAFDKAKDLGNKVKGVGEEDLVEF), 126–161 (YDIFELTVMFDTMDKDGSLLLELQEFKEALPKLKEW), and 163–198 (VDITDATTVFNEIDTNGSGVVTFDEFSCWAVTKKLQ). Residues Asp57, Asn59, Thr61, Lys63, and Glu68 each coordinate Ca(2+). Asp139, Asp141, Ser143, Glu150, Asp176, Asn178, Ser180, and Glu187 together coordinate Ca(2+). The disordered stretch occupies residues 202–229 (DPDDEENGANEGDGANAGDGVPAAEGSA). Positions 210–221 (ANEGDGANAGDG) are enriched in low complexity.

It belongs to the calflagin family.

The protein localises to the cell projection. It is found in the cilium. The protein resides in the flagellum. Its function is as follows. May contribute to the rapid motility of the trypanosomes, playing a role either in flagellar structure or in calcium metabolism. Could alternate between a GDP-bound inactive form to a calcium/GTP-bound active form. The protein is Flagellar calcium-binding protein TB-1.7G of Trypanosoma brucei brucei.